We begin with the raw amino-acid sequence, 745 residues long: uncharacterized protein (745 aa).

One can recognise an HTH araC/xylS-type domain in the interval 158 to 256 (NQVCDYIELH…HQTPKQYRGD (99 aa)). 2 consecutive DNA-binding regions (H-T-H motif) follow at residues 175-196 (SELSEYVGWSESHLSKKFAESL) and 223-246 (ITDIALQNGFSSAASFARTFKHIT).

This is an uncharacterized protein from Staphylococcus aureus.